A 602-amino-acid chain; its full sequence is Fructan 1-exohydrolase (602 aa).

The signal sequence occupies residues 1–19 (MAQAWAFLLLPVLLLSSYA). The active site involves Asp81. Asn174, Asn242, and Asn254 each carry an N-linked (GlcNAc...) asparagine glycan. Cys452 and Cys498 are joined by a disulfide.

Belongs to the glycosyl hydrolase 32 family. In terms of tissue distribution, detected in leaves, with maximum levels at the leaf tip.

It catalyses the reaction Hydrolysis of terminal, non-reducing (2-&gt;1)-linked beta-D-fructofuranose residues in fructans.. Inhibited by sucrose. Hydrolyzes inulin-type beta-(2,1)-fructans. Has low activity against beta-(2,6)-linked fructans. May play a role as a beta-(2,1)-trimmer during graminan biosynthesis. The polypeptide is Fructan 1-exohydrolase (Bromus pictus (Patagonian grass)).